The primary structure comprises 119 residues: Holo-[acyl-carrier-protein] synthase (119 aa).

Mg(2+)-binding residues include Asp8 and Glu58.

It belongs to the P-Pant transferase superfamily. AcpS family. Requires Mg(2+) as cofactor.

Its subcellular location is the cytoplasm. The enzyme catalyses apo-[ACP] + CoA = holo-[ACP] + adenosine 3',5'-bisphosphate + H(+). Transfers the 4'-phosphopantetheine moiety from coenzyme A to a Ser of acyl-carrier-protein. The polypeptide is Holo-[acyl-carrier-protein] synthase (Streptococcus suis (strain 05ZYH33)).